Reading from the N-terminus, the 331-residue chain is tRNA uridine(34) hydroxylase (331 aa).

Positions 123 to 217 (TDPEVLLIDT…YLEDVPQEES (95 aa)) constitute a Rhodanese domain. Catalysis depends on cysteine 177, which acts as the Cysteine persulfide intermediate. The interval 293-331 (KSRGEEHIGSEAAKAIKKRQAEKKLKRKNYHQHLTQGAE) is disordered. Over residues 307–323 (AIKKRQAEKKLKRKNYH) the composition is skewed to basic residues.

The protein belongs to the TrhO family.

It carries out the reaction uridine(34) in tRNA + AH2 + O2 = 5-hydroxyuridine(34) in tRNA + A + H2O. Its function is as follows. Catalyzes oxygen-dependent 5-hydroxyuridine (ho5U) modification at position 34 in tRNAs. The sequence is that of tRNA uridine(34) hydroxylase from Hahella chejuensis (strain KCTC 2396).